A 551-amino-acid polypeptide reads, in one-letter code: Membrane protein insertase YidC (551 aa).

A helical transmembrane segment spans residues 3 to 23 (ANHIRILLLVTIAIMFISLMG). The segment at 33-55 (NTKQQTSATQNNSHYDNADSSTN) is disordered. A run of 3 helical transmembrane segments spans residues 361-381 (LVGNWGLAIILVTCLIKLIFY), 431-451 (LSGCLPMLIQIPIFISLYWVL), and 504-524 (VMMFLPVIFTFLFASFPSGLV).

The protein belongs to the OXA1/ALB3/YidC family. Type 1 subfamily. In terms of assembly, interacts with the Sec translocase complex via SecD. Specifically interacts with transmembrane segments of nascent integral membrane proteins during membrane integration.

The protein localises to the cell inner membrane. Its function is as follows. Required for the insertion and/or proper folding and/or complex formation of integral membrane proteins into the membrane. Involved in integration of membrane proteins that insert both dependently and independently of the Sec translocase complex, as well as at least some lipoproteins. Aids folding of multispanning membrane proteins. This Francisella tularensis subsp. holarctica (strain OSU18) protein is Membrane protein insertase YidC.